A 540-amino-acid polypeptide reads, in one-letter code: Beta-glucosidase 1B (540 aa).

3 residues coordinate substrate: Gln-25, His-128, and Asn-174. The active-site Proton donor is the Glu-175. Tyr-316 is a substrate binding site. The Nucleophile role is filled by Glu-380. Residues Trp-430 and 437-438 each bind substrate; that span reads EW. A compositionally biased stretch (low complexity) spans 481 to 492; the sequence is PAAETKKAATPS. The disordered stretch occupies residues 481-524; the sequence is PAAETKKAATPSPLKPHGAISNGVSKKSSATKEPKSASRKKGRK.

It belongs to the glycosyl hydrolase 1 family.

The catalysed reaction is Hydrolysis of terminal, non-reducing beta-D-glucosyl residues with release of beta-D-glucose.. Functionally, plays an important role in cellulose degradation. Shows hydrolytic activity against several glycosidic compounds. The protein is Beta-glucosidase 1B of Phanerodontia chrysosporium (White-rot fungus).